The following is a 207-amino-acid chain: Large ribosomal subunit protein uL4 (207 aa).

This sequence belongs to the universal ribosomal protein uL4 family. Part of the 50S ribosomal subunit.

One of the primary rRNA binding proteins, this protein initially binds near the 5'-end of the 23S rRNA. It is important during the early stages of 50S assembly. It makes multiple contacts with different domains of the 23S rRNA in the assembled 50S subunit and ribosome. In terms of biological role, forms part of the polypeptide exit tunnel. The chain is Large ribosomal subunit protein uL4 from Rickettsia conorii (strain ATCC VR-613 / Malish 7).